The primary structure comprises 351 residues: Beta-hexosaminidase (351 aa).

Substrate contacts are provided by residues aspartate 62, arginine 70, arginine 133, and 163–164 (KH). The Proton donor/acceptor role is filled by histidine 176. Aspartate 248 functions as the Nucleophile in the catalytic mechanism.

It belongs to the glycosyl hydrolase 3 family. NagZ subfamily. In terms of assembly, monomer.

Its subcellular location is the cytoplasm. It carries out the reaction Hydrolysis of terminal non-reducing N-acetyl-D-hexosamine residues in N-acetyl-beta-D-hexosaminides.. It functions in the pathway cell wall biogenesis; peptidoglycan recycling. Plays a role in peptidoglycan recycling by cleaving the terminal beta-1,4-linked N-acetylglucosamine (GlcNAc) from peptide-linked peptidoglycan fragments, giving rise to free GlcNAc, anhydro-N-acetylmuramic acid and anhydro-N-acetylmuramic acid-linked peptides. This chain is Beta-hexosaminidase, found in Haemophilus influenzae (strain ATCC 51907 / DSM 11121 / KW20 / Rd).